The primary structure comprises 277 residues: Transcription antiterminator LicT (277 aa).

PRD domains lie at 65-170 (DIPI…EEMP) and 171-277 (NIIN…VKQA).

This sequence belongs to the transcriptional antiterminator BglG family. Phosphorylated.

Functionally, mediates positive regulation of the glucanase operon (licST) by functioning as an antiterminator factor of transcription. Prevents termination at terminator lic-t. The sequence is that of Transcription antiterminator LicT (licT) from Bacillus subtilis (strain 168).